The primary structure comprises 202 residues: Small ribosomal subunit protein uS4c (202 aa).

The 69-residue stretch at 90 to 158 (MRLDNIIFRL…MKRSRDSYEK (69 aa)) folds into the S4 RNA-binding domain.

This sequence belongs to the universal ribosomal protein uS4 family. As to quaternary structure, part of the 30S ribosomal subunit. Contacts protein S5. The interaction surface between S4 and S5 is involved in control of translational fidelity.

The protein resides in the plastid. It localises to the chloroplast. In terms of biological role, one of the primary rRNA binding proteins, it binds directly to 16S rRNA where it nucleates assembly of the body of the 30S subunit. Functionally, with S5 and S12 plays an important role in translational accuracy. This chain is Small ribosomal subunit protein uS4c (rps4), found in Anthoceros angustus (Hornwort).